Reading from the N-terminus, the 271-residue chain is Type III pantothenate kinase (271 aa).

6–13 lines the ATP pocket; that stretch reads DVRNTNIV. 109 to 112 provides a ligand contact to substrate; that stretch reads GADR. Aspartate 111 functions as the Proton acceptor in the catalytic mechanism. Aspartate 131 is a binding site for K(+). Threonine 134 serves as a coordination point for ATP. Threonine 186 serves as a coordination point for substrate.

Belongs to the type III pantothenate kinase family. Homodimer. It depends on NH4(+) as a cofactor. K(+) is required as a cofactor.

The protein localises to the cytoplasm. The catalysed reaction is (R)-pantothenate + ATP = (R)-4'-phosphopantothenate + ADP + H(+). Its pathway is cofactor biosynthesis; coenzyme A biosynthesis; CoA from (R)-pantothenate: step 1/5. Its function is as follows. Catalyzes the phosphorylation of pantothenate (Pan), the first step in CoA biosynthesis. The chain is Type III pantothenate kinase from Rhodococcus opacus (strain B4).